A 608-amino-acid chain; its full sequence is Scaffold protein salvador (608 aa).

6 disordered regions span residues 17-37 (SRRN…YMKK), 64-145 (STSP…SQNS), 157-202 (MRRQ…YDAD), 220-243 (PHSP…QQHA), 264-293 (QPRY…HTQL), and 345-425 (PQHH…ELPL). Residues 22–37 (EKSQHKEGVVGKYMKK) are compositionally biased toward basic and acidic residues. A Ferm-binding motif (FBM) motif is present at residues 32–38 (GKYMKKD). The segment covering 64–89 (STSPSCEFHPRSSSTSRNTYSCTDSQ) has biased composition (polar residues). A compositionally biased stretch (basic residues) spans 108–125 (SHSHPHSLPHPSHPHVRS). Composition is skewed to low complexity over residues 160–172 (QQSS…TSSP), 229–242 (PPQQ…HQQH), and 275–289 (QQQQ…QQLQ). A coiled-coil region spans residues 274–294 (MQQQQQQQQQQQQQLQHTQLA). Residues 358–373 (GSGGGSLSGSGRGGSS) are compositionally biased toward gly residues. Residues serine 413 and serine 416 each carry the phosphoserine modification. 2 consecutive WW domains span residues 423 to 456 (LPLP…HPLE) and 458 to 491 (EGLP…HPCL). The 48-residue stretch at 552–599 (LLQFNMFSLPELEGFDSMLVRLFKQELGTIVGFYERYRRALILEKNRR) folds into the SARAH domain.

Interacts with Wts via its WW domains. Interacts (via FBM motif) with Mer (via FERM domain). Interacts with Kibra. Interacts with Hpo (via SARAH domain). Interacts with jub. Phosphorylated by Hpo. In terms of tissue distribution, third instar larvae eye disk, expressed in a stripe in the morphogenetic furrow, decreases in the region of the second mitotic wave (SMW) and increases once again posterior to the SMW.

Its function is as follows. Plays a key role in the Hippo/SWH (Sav/Wts/Hpo) signaling pathway, a signaling pathway that plays a pivotal role in organ size control and tumor suppression by restricting proliferation and promoting apoptosis. The core of this pathway is composed of a kinase cascade wherein Hippo (Hpo), in complex with its regulatory protein Salvador (Sav), phosphorylates and activates Warts (Wts) in complex with its regulatory protein Mats, which in turn phosphorylates and inactivates the Yorkie (Yki) oncoprotein. The Hippo/SWH signaling pathway inhibits the activity of the transcriptional complex formed by Scalloped (sd) and Yki and the target genes of this pathway include cyclin-E (cycE), diap1 and bantam. Required for cell cycle exit in eye imaginal disk and hid-induced apoptotic cell deaths that are part of normal retinal development. Activation of Drice in eye imaginal disk by either Hid or Rpr is almost completely blocked by Sav expression. This is Scaffold protein salvador (sav) from Drosophila melanogaster (Fruit fly).